Here is a 240-residue protein sequence, read N- to C-terminus: Pyridoxine 5'-phosphate synthase (240 aa).

Asn-7 contacts 3-amino-2-oxopropyl phosphate. Position 9 to 10 (9 to 10 (DH)) interacts with 1-deoxy-D-xylulose 5-phosphate. Arg-18 contributes to the 3-amino-2-oxopropyl phosphate binding site. Residue His-43 is the Proton acceptor of the active site. 1-deoxy-D-xylulose 5-phosphate contacts are provided by Arg-45 and His-50. Catalysis depends on Glu-70, which acts as the Proton acceptor. Thr-100 provides a ligand contact to 1-deoxy-D-xylulose 5-phosphate. His-191 acts as the Proton donor in catalysis. Residues Gly-192 and 213–214 (GH) each bind 3-amino-2-oxopropyl phosphate.

It belongs to the PNP synthase family. In terms of assembly, homooctamer; tetramer of dimers.

Its subcellular location is the cytoplasm. It catalyses the reaction 3-amino-2-oxopropyl phosphate + 1-deoxy-D-xylulose 5-phosphate = pyridoxine 5'-phosphate + phosphate + 2 H2O + H(+). The protein operates within cofactor biosynthesis; pyridoxine 5'-phosphate biosynthesis; pyridoxine 5'-phosphate from D-erythrose 4-phosphate: step 5/5. Its function is as follows. Catalyzes the complicated ring closure reaction between the two acyclic compounds 1-deoxy-D-xylulose-5-phosphate (DXP) and 3-amino-2-oxopropyl phosphate (1-amino-acetone-3-phosphate or AAP) to form pyridoxine 5'-phosphate (PNP) and inorganic phosphate. The polypeptide is Pyridoxine 5'-phosphate synthase (Trichodesmium erythraeum (strain IMS101)).